A 140-amino-acid polypeptide reads, in one-letter code: Organic hydroperoxide resistance protein-like (140 aa).

This sequence belongs to the OsmC/Ohr family.

This chain is Organic hydroperoxide resistance protein-like, found in Staphylococcus aureus (strain USA300).